The following is a 260-amino-acid chain: Sugar fermentation stimulation protein homolog (260 aa).

Belongs to the SfsA family.

This is Sugar fermentation stimulation protein homolog from Chloroflexus aggregans (strain MD-66 / DSM 9485).